The chain runs to 205 residues: ATP synthase subunit b (205 aa).

The helical transmembrane segment at 45–65 (LGMTATAWVSLAMVIVILLLL) threads the bilayer.

This sequence belongs to the ATPase B chain family. F-type ATPases have 2 components, F(1) - the catalytic core - and F(0) - the membrane proton channel. F(1) has five subunits: alpha(3), beta(3), gamma(1), delta(1), epsilon(1). F(0) has three main subunits: a(1), b(2) and c(10-14). The alpha and beta chains form an alternating ring which encloses part of the gamma chain. F(1) is attached to F(0) by a central stalk formed by the gamma and epsilon chains, while a peripheral stalk is formed by the delta and b chains.

Its subcellular location is the cell inner membrane. In terms of biological role, f(1)F(0) ATP synthase produces ATP from ADP in the presence of a proton or sodium gradient. F-type ATPases consist of two structural domains, F(1) containing the extramembraneous catalytic core and F(0) containing the membrane proton channel, linked together by a central stalk and a peripheral stalk. During catalysis, ATP synthesis in the catalytic domain of F(1) is coupled via a rotary mechanism of the central stalk subunits to proton translocation. Its function is as follows. Component of the F(0) channel, it forms part of the peripheral stalk, linking F(1) to F(0). This Rhizorhabdus wittichii (strain DSM 6014 / CCUG 31198 / JCM 15750 / NBRC 105917 / EY 4224 / RW1) (Sphingomonas wittichii) protein is ATP synthase subunit b.